The following is a 1001-amino-acid chain: uncharacterized protein (1001 aa).

The segment covering 939 to 948 (KVVDNKRDAS) has biased composition (basic and acidic residues). Residues 939 to 1001 (KVVDNKRDAS…HTSKRVQKKN (63 aa)) form a disordered region. Phosphoserine occurs at positions 948 and 950.

This is an uncharacterized protein from Schizosaccharomyces pombe (strain 972 / ATCC 24843) (Fission yeast).